A 240-amino-acid chain; its full sequence is Ribonuclease HII (240 aa).

The RNase H type-2 domain occupies 33-222; the sequence is GPVAGVDEVG…VRRIVTRSNT (190 aa). A divalent metal cation contacts are provided by aspartate 39, glutamate 40, and aspartate 131.

The protein belongs to the RNase HII family. The cofactor is Mn(2+). Mg(2+) serves as cofactor.

It localises to the cytoplasm. The enzyme catalyses Endonucleolytic cleavage to 5'-phosphomonoester.. Its function is as follows. Endonuclease that specifically degrades the RNA of RNA-DNA hybrids. The sequence is that of Ribonuclease HII from Mycobacterium leprae (strain Br4923).